Here is a 339-residue protein sequence, read N- to C-terminus: Erlin-2 (339 aa).

Over 1-3 (MAQ) the chain is Cytoplasmic. Residues 4–24 (LGAVVAVASSFFCASLFSAVH) traverse the membrane as a helical segment. The Extracellular portion of the chain corresponds to 25–339 (KIEEGHIGVY…EPLETATKDN (315 aa)). N106 carries an N-linked (GlcNAc...) asparagine glycan. The interaction with ERLIN1 stretch occupies residues 177 to 309 (EAIRRNYELM…DIPNMFMDSA (133 aa)). K267 carries the N6-acetyllysine modification.

It belongs to the band 7/mec-2 family. In terms of assembly, forms a heteromeric complex with ERLIN1. In complex with ERLIN1, interacts with RNF170. Interacts with activated ITPR1, independently of the degree of ITPR1 polyubiquitination. Interacts with SCAP, INSIG1, SREBF1 and SREBF2 under cholesterol sufficiency conditions; indicative for an association with the SCAP-SREBP-INSIG complex. Probably part of an AMFR/gp78 and INSIG1-containing ubiquitin ligase complex involved in ERAD of HMGCR. Interacts with TMUB1; TMUB1 bridges the association with AMFR. Interacts with SYVN1 and RNF139. Interacts with TMEM259. Interacts with TMEM41B. Post-translationally, deubiquitinated by USP25; leading to stabilization.

It localises to the endoplasmic reticulum membrane. In terms of biological role, component of the ERLIN1/ERLIN2 complex which mediates the endoplasmic reticulum-associated degradation (ERAD) of inositol 1,4,5-trisphosphate receptors (IP3Rs) such as ITPR1. Promotes sterol-accelerated ERAD of HMGCR probably implicating an AMFR/gp78-containing ubiquitin ligase complex. Involved in regulation of cellular cholesterol homeostasis by regulation the SREBP signaling pathway. May promote ER retention of the SCAP-SREBF complex. In Rattus norvegicus (Rat), this protein is Erlin-2.